A 142-amino-acid polypeptide reads, in one-letter code: Large ribosomal subunit protein uL11 (142 aa).

This sequence belongs to the universal ribosomal protein uL11 family. Part of the ribosomal stalk of the 50S ribosomal subunit. Interacts with L10 and the large rRNA to form the base of the stalk. L10 forms an elongated spine to which L12 dimers bind in a sequential fashion forming a multimeric L10(L12)X complex. Post-translationally, one or more lysine residues are methylated.

In terms of biological role, forms part of the ribosomal stalk which helps the ribosome interact with GTP-bound translation factors. This Klebsiella pneumoniae subsp. pneumoniae (strain ATCC 700721 / MGH 78578) protein is Large ribosomal subunit protein uL11.